We begin with the raw amino-acid sequence, 416 residues long: MTIHSLEDLPAEGVSGRGVLVRSDLNVPLDENGVITDAGRITASVPTLKALLDGGAKVVVAAHLGRPKDGPDPKLSLEPVAAALGEQLGRHVQLAGDIVGTDALARAEGLTDGDVLLLENIRFDKRETSKDDGERLAFAKQLAELVSPEGAFVSDGFGVVHRKQASVYDVATLLPHYAGRLVADEIRVLEQLTSSTERPYAVVLGGSKVSDKLGVIESLATKADSIVIGGGMCFTFLAAQGYSVGTSLLEKEMIDTCRRLLDTYHDVLRLPVDVVVTEKFAADPPPQTVAADAIPADTMGLDIGPGSVKRFAALLSNAKTIFWNGPMGVFEFPAYATGTRGIAEAIVAATGKGAFSVVGGGDSAAAVRALGISEGSFSHISTGGGASLEYLEGKTLPGIEVLGRPQPGQTEGGGPA.

Residues 24–26 (DLN), R40, 63–66 (HLGR), R122, and R162 each bind substrate. ATP is bound by residues K212, G300, E331, and 360–363 (GGDS).

This sequence belongs to the phosphoglycerate kinase family. Monomer.

The protein localises to the cytoplasm. The catalysed reaction is (2R)-3-phosphoglycerate + ATP = (2R)-3-phospho-glyceroyl phosphate + ADP. It participates in carbohydrate degradation; glycolysis; pyruvate from D-glyceraldehyde 3-phosphate: step 2/5. The protein is Phosphoglycerate kinase of Mycobacterium ulcerans (strain Agy99).